Reading from the N-terminus, the 196-residue chain is Large ribosomal subunit protein bL9 (196 aa).

A disordered region spans residues 172–196; the sequence is NESARPEAFFDPEAEIEQEEGEENA. The segment covering 181–196 has biased composition (acidic residues); it reads FDPEAEIEQEEGEENA.

The protein belongs to the bacterial ribosomal protein bL9 family.

Binds to the 23S rRNA. In Chelativorans sp. (strain BNC1), this protein is Large ribosomal subunit protein bL9.